The primary structure comprises 119 residues: uncharacterized protein (119 aa).

The tract at residues 67–119 is disordered; that stretch reads LGLKEVQKKSNEGLNEVQGVADINKQKRPANSQDSSSVEGDIQNFLEKVTGKN. Polar residues predominate over residues 95–104; sequence PANSQDSSSV.

This is an uncharacterized protein from Anabaena variabilis.